A 458-amino-acid polypeptide reads, in one-letter code: Cytoplasmic tRNA 2-thiolation protein 2 (458 aa).

Belongs to the CTU2/NCS2 family.

It localises to the cytoplasm. It functions in the pathway tRNA modification; 5-methoxycarbonylmethyl-2-thiouridine-tRNA biosynthesis. Functionally, plays a central role in 2-thiolation of mcm(5)S(2)U at tRNA wobble positions of tRNA(Lys), tRNA(Glu) and tRNA(Gln). May act by forming a heterodimer with NCS6/CTU1 that ligates sulfur from thiocarboxylated URM1 onto the uridine of tRNAs at wobble position. This is Cytoplasmic tRNA 2-thiolation protein 2 from Arabidopsis thaliana (Mouse-ear cress).